We begin with the raw amino-acid sequence, 790 residues long: Cadherin-6 (790 aa).

Positions 1–30 (MRTYHCFWLLFWAGQPHQSFLTLLSKRTSG) are cleaved as a signal peptide. The propeptide occupies 31–53 (FPEKEKVLVLSGNSRRDLSRSKR). Cadherin domains are found at residues 54-159 (SWMW…EPMF), 160-268 (TKDV…PPRF), 269-383 (PQST…PPVF), 384-486 (SRPA…DNAP), and 487-608 (EFAM…LIHP). Residues 54–615 (SWMWNQFFLL…IHPTGLSTGA (562 aa)) are Extracellular-facing. N-linked (GlcNAc...) asparagine glycans are attached at residues N165 and N255. Residues 261–289 (VNDNPPRFPQSTYQFRAPESTPPDSPIGR) are disordered. Residues N437, N455, and N536 are each glycosylated (N-linked (GlcNAc...) asparagine). A helical transmembrane segment spans residues 616-636 (LIAILLCIIILLVTVVLFAAL). Topologically, residues 637–790 (RRQRKKEPLI…YGSMDSDKDS (154 aa)) are cytoplasmic.

It localises to the cell membrane. In terms of biological role, cadherins are calcium-dependent cell adhesion proteins. They preferentially interact with themselves in a homophilic manner in connecting cells; cadherins may thus contribute to the sorting of heterogeneous cell types. This chain is Cadherin-6 (CDH6), found in Gallus gallus (Chicken).